The following is a 158-amino-acid chain: Transcription elongation factor GreA (158 aa).

Residues 45 to 72 (AEYHAAREQQSFIEGRIKQLEGELSHAE) are a coiled coil.

Belongs to the GreA/GreB family.

Functionally, necessary for efficient RNA polymerase transcription elongation past template-encoded arresting sites. The arresting sites in DNA have the property of trapping a certain fraction of elongating RNA polymerases that pass through, resulting in locked ternary complexes. Cleavage of the nascent transcript by cleavage factors such as GreA or GreB allows the resumption of elongation from the new 3'terminus. GreA releases sequences of 2 to 3 nucleotides. The protein is Transcription elongation factor GreA of Xylella fastidiosa (strain 9a5c).